The primary structure comprises 129 residues: Succinate dehydrogenase cytochrome b556 subunit (129 aa).

Residues 1–26 (MIRNVKKQRPVNLDLQTIRFPITAIA) lie on the Cytoplasmic side of the membrane. The helical transmembrane segment at 27-52 (SILHRVSGVITFIAVGILLWLLGTSL) threads the bilayer. Topologically, residues 53–68 (SSPEGFQQAADIMDGF) are periplasmic. Residues 69–89 (IVKFIMWGILTALAYHVIVGI) traverse the membrane as a helical segment. His-84 is a heme binding site. The Cytoplasmic segment spans residues 90-108 (RHMLMDFGYLEETFEAGQR). A helical membrane pass occupies residues 109 to 129 (SAKISFVITVVLSLLAGVLVW).

The protein belongs to the cytochrome b560 family. As to quaternary structure, part of an enzyme complex containing four subunits: a flavoprotein, an iron-sulfur protein, plus two membrane-anchoring proteins, SdhC and SdhD. The complex can form homotrimers. It depends on heme as a cofactor.

It is found in the cell inner membrane. Its pathway is carbohydrate metabolism; tricarboxylic acid cycle. Membrane-anchoring subunit of succinate dehydrogenase (SDH). This chain is Succinate dehydrogenase cytochrome b556 subunit (sdhC), found in Salmonella typhi.